The primary structure comprises 270 residues: Phospholysine phosphohistidine inorganic pyrophosphate phosphatase (270 aa).

The Mg(2+) site is built by aspartate 17 and serine 19. Substrate is bound by residues 17–19 (DIS), 54–55 (TN), and lysine 189. Residue aspartate 214 coordinates Mg(2+).

The protein belongs to the HAD-like hydrolase superfamily. Homodimer. The cofactor is Mg(2+). Expressed in brain, and at lower levels in liver and kidney. Detected in thyroid (at protein level). Expressed in liver, kidney and moderately in brain.

Its subcellular location is the cytoplasm. It localises to the nucleus. It catalyses the reaction diphosphate + H2O = 2 phosphate + H(+). Phosphatase that hydrolyzes imidodiphosphate, 3-phosphohistidine and 6-phospholysine. Has broad substrate specificity and can also hydrolyze inorganic diphosphate, but with lower efficiency. This Homo sapiens (Human) protein is Phospholysine phosphohistidine inorganic pyrophosphate phosphatase (LHPP).